The sequence spans 301 residues: MHRHYNGLKTVLLLGGMWVVLLAIGWAIAGATRNSAFIMIFAVVGLLGTAYSYWNSDKLAIRSMRAVPVTPQQAPAMYRIVHELSQAAGQPMPRLFIAPTMSPNAFATGRNPEHAAVCCTEGILQLLDERELRGVLGHELMHVYNRDILTSSVAAAVAGIITSAAQMLQFAAIFGGGRGNDNRGGNPLVGLLLALLAPLAATVIQLAISRTREYDADEDGSKLTGDPLALASALRKIEGGASQFPMDPEDQKVVNTSHLMIANPFRGGAVTGLFRTHPATADRIARLENMARAGGGNPAGR.

Helical transmembrane passes span valine 11–alanine 31 and asparagine 34–tryptophan 54. Position 138 (histidine 138) interacts with Zn(2+). Glutamate 139 is a catalytic residue. Histidine 142 provides a ligand contact to Zn(2+). 2 consecutive transmembrane segments (helical) span residues alanine 154 to phenylalanine 174 and leucine 188 to isoleucine 208. A Zn(2+)-binding site is contributed by glutamate 213.

Belongs to the peptidase M48B family. Requires Zn(2+) as cofactor.

It localises to the cell membrane. The chain is Protease HtpX homolog from Kocuria rhizophila (strain ATCC 9341 / DSM 348 / NBRC 103217 / DC2201).